Consider the following 158-residue polypeptide: Dihydroneopterin triphosphate diphosphatase (158 aa).

Substrate is bound by residues K14, R36, and T47. Positions 14–153 (KNNQSVLVVI…NNAEAIKKYL (140 aa)) constitute a Nudix hydrolase domain. The Nudix box motif lies at 48-69 (GTIESDETPKKTAIRELWEEVR). Residues E63 and E67 each contribute to the Mg(2+) site. Substrate is bound at residue 88 to 91 (FEIF). E124 lines the Mg(2+) pocket. S142 contacts substrate.

This sequence belongs to the Nudix hydrolase family. Mg(2+) is required as a cofactor.

The enzyme catalyses 7,8-dihydroneopterin 3'-triphosphate + H2O = 7,8-dihydroneopterin 3'-phosphate + diphosphate + H(+). In terms of biological role, catalyzes the hydrolysis of dihydroneopterin triphosphate to dihydroneopterin monophosphate and pyrophosphate. Required for efficient folate biosynthesis. Can also hydrolyze nucleoside triphosphates with a preference for dATP. This chain is Dihydroneopterin triphosphate diphosphatase (nudB), found in Haemophilus influenzae (strain ATCC 51907 / DSM 11121 / KW20 / Rd).